Reading from the N-terminus, the 117-residue chain is Non-specific lipid-transfer protein 3 (117 aa).

Residues 1–25 (MAGLVKLSCLVLACMIVAGPIATNA) form the signal peptide. Disulfide bonds link C29/C76, C39/C53, C54/C99, and C74/C113.

Belongs to the plant LTP family.

Its function is as follows. Plant non-specific lipid-transfer proteins transfer phospholipids as well as galactolipids across membranes. May play a role in wax or cutin deposition in the cell walls of expanding epidermal cells and certain secretory tissues. This chain is Non-specific lipid-transfer protein 3 (LTP3), found in Brassica napus (Rape).